Here is a 428-residue protein sequence, read N- to C-terminus: MKTSLFKSLYFQVLTAIAIGILLGHFYPEIGEQMKPLGDGFVKLIKMIIAPVIFCTVVTGIAGMESMKAVGRTGAVALLYFEIVSTIALIIGLIIVNVVQPGAGMNVDPTTLDAKAVAVYADQAKDQGIVAFIMDVIPASVIGAFASGNILQVLLFAVLFGFALHRLGSKGQLIFNVIESFSQVIFGIINMIMRLAPIGAFGAMAFTIGKYGVGTLVQLGQLIICFYITCILFVVLVLGSIAKATGFSIFKFIRYIREELLIVLGTSSSESALPRMLDKMEKLGCRKSVVGLVIPTGYSFNLDGTSIYLTMAAVFIAQATNSQMDIVHQITLLIVLLLSSKGAAGVTGSGFIVLAATLSAVGHLPVAGLALILGIDRFMSEARALTNLVGNGVATIVVAKWVKELDHKKLDDVLNNRAPDGKTHELSS.

Transmembrane regions (helical) follow at residues 8-28, 44-64, 76-96, 142-162, 184-204, 222-242, 326-346, and 352-372; these read SLYFQVLTAIAIGILLGHFYP, LIKMIIAPVIFCTVVTGIAGM, VALLYFEIVSTIALIIGLIIV, IGAFASGNILQVLLFAVLFGF, VIFGIINMIMRLAPIGAFGAM, LIICFYITCILFVVLVLGSIA, IVHQITLLIVLLLSSKGAAGV, and IVLAATLSAVGHLPVAGLALI.

This sequence belongs to the dicarboxylate/amino acid:cation symporter (DAACS) (TC 2.A.23) family.

Its subcellular location is the cell inner membrane. Responsible for the transport of dicarboxylates such as succinate, fumarate, and malate from the periplasm across the membrane. In Escherichia coli O127:H6 (strain E2348/69 / EPEC), this protein is C4-dicarboxylate transport protein.